Consider the following 171-residue polypeptide: METFEDGQLGVLTRPIRGYRAIDCYSQKIYRESKQKNWIRAISTLRVDTGSTVLMIKGPNNSNLFNTSQVYVENIEDFRGNPISDDFECQSSAMAYPIKNFYNKDKKQLDIGIDFFEDWTFDVQVTFYYKHIYKKNQFIKSPLTKTNNYSIMNLDGFYLFLDKSQAMTSDI.

It belongs to the mimivirus L87/L94 family.

This is an uncharacterized protein from Acanthamoeba polyphaga (Amoeba).